Consider the following 146-residue polypeptide: Ribonuclease H (146 aa).

Positions 1–141 (MKHVDIFTDG…ADELARKGME (141 aa)) constitute an RNase H type-1 domain. Asp-9, Glu-47, Asp-69, and Asp-133 together coordinate Mg(2+). The interval 123 to 146 (HAGHPENERADELARKGMEPFKRR) is disordered. The span at 125–146 (GHPENERADELARKGMEPFKRR) shows a compositional bias: basic and acidic residues.

Belongs to the RNase H family. Monomer. Requires Mg(2+) as cofactor.

It localises to the cytoplasm. It catalyses the reaction Endonucleolytic cleavage to 5'-phosphomonoester.. In terms of biological role, endonuclease that specifically degrades the RNA of RNA-DNA hybrids. This is Ribonuclease H from Agrobacterium fabrum (strain C58 / ATCC 33970) (Agrobacterium tumefaciens (strain C58)).